The primary structure comprises 925 residues: Protein translocase subunit SecA (925 aa).

ATP contacts are provided by residues Q87, 105-109 (GEGKT), and D515. Residues C909, C911, C920, and H921 each coordinate Zn(2+).

It belongs to the SecA family. As to quaternary structure, monomer and homodimer. Part of the essential Sec protein translocation apparatus which comprises SecA, SecYEG and auxiliary proteins SecDF-YajC and YidC. Zn(2+) serves as cofactor.

It localises to the cell inner membrane. The protein resides in the cytoplasm. It catalyses the reaction ATP + H2O + cellular proteinSide 1 = ADP + phosphate + cellular proteinSide 2.. Part of the Sec protein translocase complex. Interacts with the SecYEG preprotein conducting channel. Has a central role in coupling the hydrolysis of ATP to the transfer of proteins into and across the cell membrane, serving both as a receptor for the preprotein-SecB complex and as an ATP-driven molecular motor driving the stepwise translocation of polypeptide chains across the membrane. The sequence is that of Protein translocase subunit SecA from Cupriavidus necator (strain ATCC 17699 / DSM 428 / KCTC 22496 / NCIMB 10442 / H16 / Stanier 337) (Ralstonia eutropha).